The chain runs to 61 residues: Small ribosomal subunit protein uS14 (61 aa).

4 residues coordinate Zn(2+): Cys-24, Cys-27, Cys-40, and Cys-43.

Belongs to the universal ribosomal protein uS14 family. Zinc-binding uS14 subfamily. Part of the 30S ribosomal subunit. Contacts proteins S3 and S10. The cofactor is Zn(2+).

Binds 16S rRNA, required for the assembly of 30S particles and may also be responsible for determining the conformation of the 16S rRNA at the A site. This Desulfitobacterium hafniense (strain Y51) protein is Small ribosomal subunit protein uS14.